We begin with the raw amino-acid sequence, 666 residues long: Endogenous retrovirus group K member 10 Gag polyprotein (666 aa).

Gly-2 carries the N-myristoyl glycine lipid modification. The disordered stretch occupies residues Glu-164–Pro-183. CCHC-type zinc fingers lie at residues Gly-544–Val-561 and Asp-580–Ser-597. The interval Lys-598–Ser-642 is disordered. A compositionally biased stretch (polar residues) spans Gln-604 to Gly-622. The span at Phe-624 to Pro-640 shows a compositional bias: low complexity.

It belongs to the beta type-B retroviral Gag protein family. HERV class-II K(HML-2) gag subfamily. Post-translationally, myristoylation is essential for retroviral assembly. Alteration of the glycine residue leads to a block in the budding of particles and an accumulation of Gag inside the cell. In terms of processing, specific enzymatic cleavages may yield mature proteins.

It is found in the cell membrane. The products of the Gag polyproteins of infectious retroviruses perform highly complex orchestrated tasks during the assembly, budding, maturation, and infection stages of the viral replication cycle. During viral assembly, the proteins form membrane associations and self-associations that ultimately result in budding of an immature virion from the infected cell. Gag precursors also function during viral assembly to selectively bind and package two plus strands of genomic RNA. Endogenous Gag proteins may have kept, lost or modified their original function during evolution. The sequence is that of Endogenous retrovirus group K member 10 Gag polyprotein (ERVK-10) from Homo sapiens (Human).